A 681-amino-acid polypeptide reads, in one-letter code: MPEARQILVTSALPYANGSIHLGHMLEYIQTDIWVRFQKQRGNQCVYVCADDAHGSAIMLRAEKEGITPEQLIAYVQAEHSADFADFLVDFDNYHSTHAEENRALSEAIYLRLRDAGHIATRSVTQYFDPEKGMFLADRFIKGTCPKCGAEDQYGDNCEKCGATYEPTELKDPRSAISGATPVLKDSKHFFFKLPDFEAMLKEWTRSGTLQEAVANKIAEWLDGGLQEWDISRDAPYFGFEIPDEPGKYFYVWLDAPIGYMASFKNLCARRPELDFDAFWCKDSKAELYHFIGKDIVNFHTLFWPAMLEGAGFRKPTAVNVHGYLTVNGQKMSKSRGTFIKARTYLDHLNPEYLRYYYASKLSRGVDDLDLNLEDFVQKVNSDLVGKVVNIASRCAGFIHKGNAGLMVDANPEPELWEAFQVAAPAIAEAYEGRDFGRAMREIMALADRANAWIADKAPWALNKQEGKQTEVQEICAFGINLFRQLVIFLKPVLPNLATAAEAFLNVAPLTWQDHTLRLANHPLNPFTPLMTRIEPAKIDAMIEASKEDLAAQNSEAAAPQGNGELVKEPLAPEIDFNAFAAVDLRIALIEKAEFVEGADKLLRLTLDIGDAKRNVFSGIKSAYPEPSELEGRLTLYVANLAPRKMKFGLSEGMVLAAGPGGSEIFLLSPDAGAKPGQRVH.

Residues 14 to 24 carry the 'HIGH' region motif; that stretch reads PYANGSIHLGH. Zn(2+)-binding residues include Cys145, Cys148, Cys158, and Cys161. Positions 331 to 335 match the 'KMSKS' region motif; it reads KMSKS. Lys334 provides a ligand contact to ATP. A tRNA-binding domain is found at 579–681; it reads AFAAVDLRIA…AGAKPGQRVH (103 aa).

It belongs to the class-I aminoacyl-tRNA synthetase family. MetG type 1 subfamily. In terms of assembly, homodimer. Zn(2+) is required as a cofactor.

It is found in the cytoplasm. It carries out the reaction tRNA(Met) + L-methionine + ATP = L-methionyl-tRNA(Met) + AMP + diphosphate. Functionally, is required not only for elongation of protein synthesis but also for the initiation of all mRNA translation through initiator tRNA(fMet) aminoacylation. This chain is Methionine--tRNA ligase, found in Azotobacter vinelandii (strain DJ / ATCC BAA-1303).